The following is a 189-amino-acid chain: dTTP/UTP pyrophosphatase (189 aa).

Aspartate 71 functions as the Proton acceptor in the catalytic mechanism.

Belongs to the Maf family. YhdE subfamily. It depends on a divalent metal cation as a cofactor.

It is found in the cytoplasm. The catalysed reaction is dTTP + H2O = dTMP + diphosphate + H(+). It carries out the reaction UTP + H2O = UMP + diphosphate + H(+). Its function is as follows. Nucleoside triphosphate pyrophosphatase that hydrolyzes dTTP and UTP. May have a dual role in cell division arrest and in preventing the incorporation of modified nucleotides into cellular nucleic acids. The polypeptide is dTTP/UTP pyrophosphatase (Pseudoalteromonas translucida (strain TAC 125)).